The primary structure comprises 214 residues: MTRPLFITFEGPEGAGKTSVLEALVSELKPILGDQLVTTREPGGNPISEAIRQILQPEDDNGMDDRTEALLYAAARRQHIVETILPALSAGKVLISDRYVDSSLAYQGGGRDLGVDNIWQINQFAIDGLLPDLTIYFDVPSELGLSRVMANRQGKIDRLDKESLSFHQRVRTTYLELQHDFSDRIKIIDATQPLTDVISDTRALLQEALNSRKG.

Residue 11–18 (GPEGAGKT) coordinates ATP.

This sequence belongs to the thymidylate kinase family.

The enzyme catalyses dTMP + ATP = dTDP + ADP. Its function is as follows. Phosphorylation of dTMP to form dTDP in both de novo and salvage pathways of dTTP synthesis. The protein is Thymidylate kinase of Leuconostoc citreum (strain KM20).